Here is a 509-residue protein sequence, read N- to C-terminus: Probable aspartic-type endopeptidase CTSD (509 aa).

The N-terminal stretch at 1 to 21 (MQFLWLCLLSAVTLQFTGTLA) is a signal peptide. A Peptidase A1 domain is found at 102–408 (YFSEVKVGSE…DFDKNRVGLA (307 aa)). Asp120 is a catalytic residue. Asn174 is a glycosylation site (N-linked (GlcNAc...) asparagine). Asp302 is an active-site residue. Asn361 carries an N-linked (GlcNAc...) asparagine glycan. The disordered stretch occupies residues 451-489 (NKAPSGGSPGLPAESGSDSTTNGEATNGATSSPNSSSSV). The segment covering 466-480 (GSDSTTNGEATNGAT) has biased composition (polar residues). Residue Asn484 is glycosylated (N-linked (GlcNAc...) asparagine). Residue Ser485 is the site of GPI-anchor amidated serine attachment. Residues 486 to 509 (SSSVLTPTWLTLAVFFAIGSSLWS) constitute a propeptide, removed in mature form.

This sequence belongs to the peptidase A1 family.

The protein resides in the cell membrane. In terms of biological role, probable GPI-anchored aspartic-type endopeptidase which contributes to virulence. In Trichophyton verrucosum (strain HKI 0517), this protein is Probable aspartic-type endopeptidase CTSD (CTSD).